Here is a 469-residue protein sequence, read N- to C-terminus: UDP-N-acetylmuramate--L-alanine ligase (469 aa).

122–128 serves as a coordination point for ATP; sequence GTHGKTT.

It belongs to the MurCDEF family.

Its subcellular location is the cytoplasm. The enzyme catalyses UDP-N-acetyl-alpha-D-muramate + L-alanine + ATP = UDP-N-acetyl-alpha-D-muramoyl-L-alanine + ADP + phosphate + H(+). It functions in the pathway cell wall biogenesis; peptidoglycan biosynthesis. Its function is as follows. Cell wall formation. The polypeptide is UDP-N-acetylmuramate--L-alanine ligase (Legionella pneumophila subsp. pneumophila (strain Philadelphia 1 / ATCC 33152 / DSM 7513)).